The chain runs to 192 residues: Erythropoietin (192 aa).

Residues 1–27 (MGVHECPAWLWLLLSLVSLPLGLPVPG) form the signal peptide. Intrachain disulfides connect C34-C187 and C56-C60. N-linked (GlcNAc...) asparagine glycosylation occurs at N51. N-linked (GlcNAc...) asparagine glycosylation is found at N65 and N110. S152 carries O-linked (GalNAc...) serine glycosylation.

Belongs to the EPO/TPO family. In terms of tissue distribution, produced by kidney or liver of adult mammals and by liver of fetal or neonatal mammals.

It is found in the secreted. Hormone involved in the regulation of erythrocyte proliferation and differentiation and the maintenance of a physiological level of circulating erythrocyte mass. Binds to EPOR leading to EPOR dimerization and JAK2 activation thereby activating specific downstream effectors, including STAT1 and STAT3. This chain is Erythropoietin (EPO), found in Macaca fascicularis (Crab-eating macaque).